A 390-amino-acid chain; its full sequence is tRNA-specific 2-thiouridylase MnmA (390 aa).

ATP contacts are provided by residues 20-27 (AMSGGVDS) and Leu-46. Catalysis depends on Cys-114, which acts as the Nucleophile. Cys-114 and Cys-211 form a disulfide bridge. Gly-138 contributes to the ATP binding site. Positions 161-163 (RDQ) are interaction with tRNA. The Cysteine persulfide intermediate role is filled by Cys-211.

Belongs to the MnmA/TRMU family.

The protein resides in the cytoplasm. It catalyses the reaction S-sulfanyl-L-cysteinyl-[protein] + uridine(34) in tRNA + AH2 + ATP = 2-thiouridine(34) in tRNA + L-cysteinyl-[protein] + A + AMP + diphosphate + H(+). Catalyzes the 2-thiolation of uridine at the wobble position (U34) of tRNA, leading to the formation of s(2)U34. This chain is tRNA-specific 2-thiouridylase MnmA, found in Azorhizobium caulinodans (strain ATCC 43989 / DSM 5975 / JCM 20966 / LMG 6465 / NBRC 14845 / NCIMB 13405 / ORS 571).